The primary structure comprises 181 residues: Peptidyl-tRNA hydrolase (181 aa).

Tyr-14 serves as a coordination point for tRNA. Catalysis depends on His-19, which acts as the Proton acceptor. Positions 60, 62, and 106 each coordinate tRNA.

This sequence belongs to the PTH family. As to quaternary structure, monomer.

It localises to the cytoplasm. The catalysed reaction is an N-acyl-L-alpha-aminoacyl-tRNA + H2O = an N-acyl-L-amino acid + a tRNA + H(+). Hydrolyzes ribosome-free peptidyl-tRNAs (with 1 or more amino acids incorporated), which drop off the ribosome during protein synthesis, or as a result of ribosome stalling. Its function is as follows. Catalyzes the release of premature peptidyl moieties from peptidyl-tRNA molecules trapped in stalled 50S ribosomal subunits, and thus maintains levels of free tRNAs and 50S ribosomes. The polypeptide is Peptidyl-tRNA hydrolase (Campylobacter curvus (strain 525.92)).